Reading from the N-terminus, the 921-residue chain is Non-structural polyprotein 1A (921 aa).

Transmembrane regions (helical) follow at residues V240–G260, V287–V307, L314–M334, and G345–T365. Residues H462, D490, and S552 each act as charge relay system; for serine protease activity in the active site. Y694 carries the post-translational modification O-(5'-phospho-RNA)-tyrosine. 2 disordered regions span residues N753–Q813 and K900–H921. Over residues S784–Q796 the composition is skewed to basic and acidic residues. Residues K908–H921 show a composition bias toward low complexity.

The protein belongs to the astroviridae polyprotein 1A family. Monomer. In terms of processing, cleaved by the viral and host proteases. The protease is probably autocatalytically cleaved.

It is found in the host membrane. The enzyme catalyses RNA(n) + a ribonucleoside 5'-triphosphate = RNA(n+1) + diphosphate. In terms of biological role, responsible for the cleavage of the polyprotein into functional products. Its function is as follows. Protein covalently attached to the 5' extremity of the genomic and subgenomic RNAs. It may serve as a primer for the replicase. In Homo sapiens (Human), this protein is Non-structural polyprotein 1A (ORF1).